The chain runs to 364 residues: Dihydroorotate dehydrogenase (quinone) (364 aa).

Residues 61–65 (AGYDK) and Thr85 each bind FMN. Lys65 serves as a coordination point for substrate. Residue 110–114 (NRLGF) participates in substrate binding. Asn139 and Asn170 together coordinate FMN. Substrate is bound at residue Asn170. The active-site Nucleophile is Ser173. Asn175 is a substrate binding site. The FMN site is built by Lys215 and Ser243. 244 to 245 (NT) is a binding site for substrate. FMN is bound by residues Gly266, Gly295, and 316 to 317 (YT).

The protein belongs to the dihydroorotate dehydrogenase family. Type 2 subfamily. In terms of assembly, monomer. FMN is required as a cofactor.

Its subcellular location is the cell membrane. The enzyme catalyses (S)-dihydroorotate + a quinone = orotate + a quinol. It functions in the pathway pyrimidine metabolism; UMP biosynthesis via de novo pathway; orotate from (S)-dihydroorotate (quinone route): step 1/1. Catalyzes the conversion of dihydroorotate to orotate with quinone as electron acceptor. The sequence is that of Dihydroorotate dehydrogenase (quinone) from Brucella abortus (strain S19).